The following is a 358-amino-acid chain: Probable D-xylulose reductase A (358 aa).

Cys47, His72, and Glu73 together coordinate Zn(2+). An NAD(+)-binding site is contributed by 182 to 187 (GAGPVG).

Belongs to the zinc-containing alcohol dehydrogenase family. Zn(2+) is required as a cofactor.

The enzyme catalyses xylitol + NAD(+) = D-xylulose + NADH + H(+). It participates in carbohydrate degradation; L-arabinose degradation via L-arabinitol; D-xylulose 5-phosphate from L-arabinose (fungal route): step 4/5. Xylitol dehydrogenase which catalyzes the conversion of xylitol to D-xylulose. Xylose is a major component of hemicelluloses such as xylan. Most fungi utilize D-xylose via three enzymatic reactions, xylose reductase (XR), xylitol dehydrogenase (XDH), and xylulokinase, to form xylulose 5-phosphate, which enters pentose phosphate pathway. This is Probable D-xylulose reductase A (xdhA) from Neosartorya fischeri (strain ATCC 1020 / DSM 3700 / CBS 544.65 / FGSC A1164 / JCM 1740 / NRRL 181 / WB 181) (Aspergillus fischerianus).